The chain runs to 380 residues: Chaperone protein DnaJ (380 aa).

One can recognise a J domain in the interval 5–70; sequence DYYEVLGVER…SKRAAYDQYG (66 aa). A CR-type zinc finger spans residues 139–217; the sequence is GTTVNIRVPT…CHGEGRVEES (79 aa). Zn(2+) is bound by residues Cys-152, Cys-155, Cys-169, Cys-172, Cys-191, Cys-194, Cys-205, and Cys-208. CXXCXGXG motif repeat units follow at residues 152 to 159, 169 to 176, 191 to 198, and 205 to 212; these read CKPCDGSG, CPTCGGIG, CPRCHGHG, and CDSCHGEG.

Belongs to the DnaJ family. In terms of assembly, homodimer. The cofactor is Zn(2+).

It localises to the cytoplasm. Participates actively in the response to hyperosmotic and heat shock by preventing the aggregation of stress-denatured proteins and by disaggregating proteins, also in an autonomous, DnaK-independent fashion. Unfolded proteins bind initially to DnaJ; upon interaction with the DnaJ-bound protein, DnaK hydrolyzes its bound ATP, resulting in the formation of a stable complex. GrpE releases ADP from DnaK; ATP binding to DnaK triggers the release of the substrate protein, thus completing the reaction cycle. Several rounds of ATP-dependent interactions between DnaJ, DnaK and GrpE are required for fully efficient folding. Also involved, together with DnaK and GrpE, in the DNA replication of plasmids through activation of initiation proteins. The sequence is that of Chaperone protein DnaJ from Pseudomonas syringae pv. tomato (strain ATCC BAA-871 / DC3000).